The primary structure comprises 121 residues: Histone H2B, sperm (121 aa).

Positions M1 to K30 are disordered. Residue P2 is modified to N,N-dimethylproline. An O-linked (GlcNAc) serine glycan is attached at S108. K116 participates in a covalent cross-link: Glycyl lysine isopeptide (Lys-Gly) (interchain with G-Cter in ubiquitin).

The protein belongs to the histone H2B family. As to quaternary structure, the nucleosome is a histone octamer containing two molecules each of H2A, H2B, H3 and H4 assembled in one H3-H4 heterotetramer and two H2A-H2B heterodimers. The octamer wraps approximately 147 bp of DNA. Post-translationally, monoubiquitination of Lys-116 gives a specific tag for epigenetic transcriptional activation and is also prerequisite for histone H3 'Lys-4' and 'Lys-79' methylation. GlcNAcylation at Ser-108 promotes monoubiquitination of Lys-116. It fluctuates in response to extracellular glucose, and associates with transcribed genes.

The protein resides in the nucleus. It localises to the chromosome. Core component of nucleosome. Nucleosomes wrap and compact DNA into chromatin, limiting DNA accessibility to the cellular machineries which require DNA as a template. Histones thereby play a central role in transcription regulation, DNA repair, DNA replication and chromosomal stability. DNA accessibility is regulated via a complex set of post-translational modifications of histones, also called histone code, and nucleosome remodeling. This Marthasterias glacialis (Spiny starfish) protein is Histone H2B, sperm.